Here is a 144-residue protein sequence, read N- to C-terminus: MSELFSNDNIFLNVNVNSQNEAIEKAGKALVDSGAVTDAYIQAMKDREQVVSTFMGNGLAIPHGTDEAKTNVIHSGLTLLQIPEGVDWDGEVVKVVVGIAGKDGEHLDLLSKIAITFSEEENVDRIVQAKSAEEIKQVFEEADA.

One can recognise a PTS EIIA type-2 domain in the interval 3–142; that stretch reads ELFSNDNIFL…EEIKQVFEEA (140 aa). The active-site Tele-phosphohistidine intermediate is His-63. His-63 carries the phosphohistidine; by HPr modification.

Homodimer or homotrimer. Seems to be a monomer when not phosphorylated.

It localises to the cytoplasm. In terms of biological role, the phosphoenolpyruvate-dependent sugar phosphotransferase system (sugar PTS), a major carbohydrate active transport system, catalyzes the phosphorylation of incoming sugar substrates concomitantly with their translocation across the cell membrane. The enzyme II CmtAB PTS system is involved in D-mannitol transport. The protein is Mannitol-specific phosphotransferase enzyme IIA component (mtlF) of Staphylococcus aureus (strain COL).